Consider the following 230-residue polypeptide: Cytidylate kinase (230 aa).

12–20 (GPSGAGKGT) is a binding site for ATP.

This sequence belongs to the cytidylate kinase family. Type 1 subfamily.

Its subcellular location is the cytoplasm. It carries out the reaction CMP + ATP = CDP + ADP. The enzyme catalyses dCMP + ATP = dCDP + ADP. This Aeromonas hydrophila subsp. hydrophila (strain ATCC 7966 / DSM 30187 / BCRC 13018 / CCUG 14551 / JCM 1027 / KCTC 2358 / NCIMB 9240 / NCTC 8049) protein is Cytidylate kinase.